We begin with the raw amino-acid sequence, 156 residues long: uncharacterized protein (156 aa).

This is an uncharacterized protein from Schizosaccharomyces pombe (strain 972 / ATCC 24843) (Fission yeast).